The primary structure comprises 448 residues: Argininosuccinate synthase (448 aa).

Residues 17–25 (AFSGGLDTS) and Ala-43 contribute to the ATP site. An L-citrulline-binding site is contributed by Tyr-99. The ATP site is built by Gly-129 and Thr-131. Thr-131, Asn-135, and Asp-136 together coordinate L-aspartate. L-citrulline is bound at residue Asn-135. Residue Asp-136 coordinates ATP. Positions 139 and 192 each coordinate L-citrulline. Asp-194 serves as a coordination point for ATP. Residues Thr-201, Glu-203, and Glu-280 each contribute to the L-citrulline site.

The protein belongs to the argininosuccinate synthase family. Type 2 subfamily. In terms of assembly, homotetramer.

It is found in the cytoplasm. It carries out the reaction L-citrulline + L-aspartate + ATP = 2-(N(omega)-L-arginino)succinate + AMP + diphosphate + H(+). It functions in the pathway amino-acid biosynthesis; L-arginine biosynthesis; L-arginine from L-ornithine and carbamoyl phosphate: step 2/3. This is Argininosuccinate synthase from Bradyrhizobium sp. (strain ORS 278).